The primary structure comprises 148 residues: Thiol-disulfide oxidoreductase YkuV (148 aa).

The Thioredoxin domain occupies 2 to 145 (KLRQPMPELT…LEKRVNRVLA (144 aa)). An intrachain disulfide couples cysteine 41 to cysteine 44.

In terms of assembly, monomer.

It is found in the cytoplasm. Its function is as follows. Participates in various redox reactions through the reversible oxidation of its active center dithiol to a disulfide and catalyzes dithiol-disulfide exchange reactions. The chain is Thiol-disulfide oxidoreductase YkuV (ykuV) from Bacillus subtilis (strain 168).